The sequence spans 381 residues: tRNA pseudouridine synthase D (381 aa).

Catalysis depends on Asp81, which acts as the Nucleophile. The region spanning 160 to 335 (GMPNYFGSQR…TLGSRRFFWV (176 aa)) is the TRUD domain.

This sequence belongs to the pseudouridine synthase TruD family.

It carries out the reaction uridine(13) in tRNA = pseudouridine(13) in tRNA. Its function is as follows. Responsible for synthesis of pseudouridine from uracil-13 in transfer RNAs. The chain is tRNA pseudouridine synthase D from Helicobacter pylori (strain P12).